The following is a 209-amino-acid chain: Ribonuclease HII (209 aa).

The RNase H type-2 domain maps to 20–209; the sequence is GLVAGVDEAG…VARSLPGACR (190 aa). A divalent metal cation contacts are provided by Asp-26, Glu-27, and Asp-118.

Belongs to the RNase HII family. It depends on Mn(2+) as a cofactor. The cofactor is Mg(2+).

Its subcellular location is the cytoplasm. It catalyses the reaction Endonucleolytic cleavage to 5'-phosphomonoester.. Functionally, endonuclease that specifically degrades the RNA of RNA-DNA hybrids. This Verminephrobacter eiseniae (strain EF01-2) protein is Ribonuclease HII.